The chain runs to 26 residues: Acetylcholine receptor subunit delta (26 aa).

It belongs to the ligand-gated ion channel (TC 1.A.9) family. Acetylcholine receptor (TC 1.A.9.1) subfamily. In terms of assembly, pentamer of two alpha chains, and one each of the beta, delta, and gamma chains.

Its subcellular location is the postsynaptic cell membrane. It localises to the cell membrane. The catalysed reaction is K(+)(in) = K(+)(out). The enzyme catalyses Na(+)(in) = Na(+)(out). Its function is as follows. After binding acetylcholine, the AChR responds by an extensive change in conformation that affects all subunits and leads to opening of an ion-conducting channel across the plasma membrane. The sequence is that of Acetylcholine receptor subunit delta (chrnd) from Electrophorus electricus (Electric eel).